The following is a 498-amino-acid chain: Capsanthin/capsorubin synthase, chromoplastic (498 aa).

The transit peptide at 1–52 directs the protein to the chromoplast; that stretch reads METLLKPFPSPLLSIPTPNMYSFKHNSTFPNPTKQKDSRKFHYRNKSSTHFC. 84 to 112 contacts NAD(+); that stretch reads VIIIGTGPAGLRLAEQVSKYGIKVCCVDP. The short motif at 293-297 is the FLEET motif element; it reads FLEET.

Belongs to the lycopene cyclase family. As to quaternary structure, monomer. FAD is required as a cofactor. NADPH serves as cofactor.

It is found in the plastid. It localises to the chromoplast. The enzyme catalyses all-trans-violaxanthin = all-trans-capsorubin. It carries out the reaction all-trans-antheraxanthin = all-trans-capsanthin. It catalyses the reaction all-trans-violaxanthin = (5R,6S)-5,6-epoxi-capsanthin. The catalysed reaction is (5R,6S)-5,6-epoxi-capsanthin = all-trans-capsorubin. Its pathway is carotenoid biosynthesis; capsanthin biosynthesis; capsanthin from antheraxanthin: step 1/1. The protein operates within carotenoid biosynthesis; capsorubin biosynthesis; capsorubin from violaxanthin: step 1/1. Its function is as follows. Catalyzes the conversion of the ubiquitous 5,6-epoxycarotenoids, antheraxanthin and violaxanthin, into capsanthin and capsorubin, respectively. In Capsicum annuum (Capsicum pepper), this protein is Capsanthin/capsorubin synthase, chromoplastic.